Reading from the N-terminus, the 295-residue chain is MSKIPSVNIKALLDAGVHFGHKTSRWNPKMASYIYGKRDDVHIIDLRQSVALMNVALNAIYETVKKDGKILFVSTKIQASDIIAEYAEKCGQYYVNHRWLGGMLTNWKTIAGSIEKLNKLDKTLENEEALMGYTKKEILDMSRKKDKLLLSLAGIRNLNSKPDLLVVIDTNKEHIAINEAVKLNVPIVAVVDTNSNPDNVDYPIPGNDDSIRSIRLYCSLFADAALQGLEESMKASGVDMGAMQEHTDKGLTSKNVSKLKQAKKFSKTKNIDEETNTEFEQVLNDADENKNSDNA.

The interval 261-295 is disordered; that stretch reads QAKKFSKTKNIDEETNTEFEQVLNDADENKNSDNA.

The protein belongs to the universal ribosomal protein uS2 family.

This is Small ribosomal subunit protein uS2 from Rickettsia rickettsii (strain Sheila Smith).